Consider the following 484-residue polypeptide: NADH-quinone oxidoreductase subunit N (484 aa).

14 helical membrane-spanning segments follow: residues 11 to 31 (SLWI…VLLI), 42 to 62 (VTYY…FNLI), 79 to 98 (MASV…MVYS), 113 to 133 (FVLV…YSLL), 134 to 154 (TLYL…AIAR), 167 to 187 (FVLG…IYGI), 211 to 231 (LIIN…LGAV), 248 to 268 (VTLF…VRIL), 279 to 299 (WSDL…VVAL), 313 to 333 (ISHV…GYGA), 335 to 355 (AFYM…IILL), 378 to 398 (FALM…LVGF), 408 to 428 (VVSA…VISA), and 457 to 477 (LVLS…DFWM).

It belongs to the complex I subunit 2 family. As to quaternary structure, NDH-1 is composed of 14 different subunits. Subunits NuoA, H, J, K, L, M, N constitute the membrane sector of the complex.

It localises to the cell inner membrane. The catalysed reaction is a quinone + NADH + 5 H(+)(in) = a quinol + NAD(+) + 4 H(+)(out). In terms of biological role, NDH-1 shuttles electrons from NADH, via FMN and iron-sulfur (Fe-S) centers, to quinones in the respiratory chain. The immediate electron acceptor for the enzyme in this species is believed to be ubiquinone. Couples the redox reaction to proton translocation (for every two electrons transferred, four hydrogen ions are translocated across the cytoplasmic membrane), and thus conserves the redox energy in a proton gradient. The polypeptide is NADH-quinone oxidoreductase subunit N (Ruthia magnifica subsp. Calyptogena magnifica).